The following is a 362-amino-acid chain: Phosphoserine aminotransferase (362 aa).

Arg43 lines the L-glutamate pocket. Residues 77–78 (AT), Trp103, Thr153, Asp173, and Gln196 each bind pyridoxal 5'-phosphate. Lys197 is modified (N6-(pyridoxal phosphate)lysine). 238 to 239 (NT) is a pyridoxal 5'-phosphate binding site.

Belongs to the class-V pyridoxal-phosphate-dependent aminotransferase family. SerC subfamily. As to quaternary structure, homodimer. Pyridoxal 5'-phosphate is required as a cofactor.

The protein resides in the cytoplasm. The enzyme catalyses O-phospho-L-serine + 2-oxoglutarate = 3-phosphooxypyruvate + L-glutamate. The catalysed reaction is 4-(phosphooxy)-L-threonine + 2-oxoglutarate = (R)-3-hydroxy-2-oxo-4-phosphooxybutanoate + L-glutamate. It participates in amino-acid biosynthesis; L-serine biosynthesis; L-serine from 3-phospho-D-glycerate: step 2/3. Its pathway is cofactor biosynthesis; pyridoxine 5'-phosphate biosynthesis; pyridoxine 5'-phosphate from D-erythrose 4-phosphate: step 3/5. Catalyzes the reversible conversion of 3-phosphohydroxypyruvate to phosphoserine and of 3-hydroxy-2-oxo-4-phosphonooxybutanoate to phosphohydroxythreonine. This Xylella fastidiosa (strain 9a5c) protein is Phosphoserine aminotransferase.